A 124-amino-acid chain; its full sequence is Urease subunit beta (124 aa).

It belongs to the urease beta subunit family. In terms of assembly, heterotrimer of UreA (gamma), UreB (beta) and UreC (alpha) subunits. Three heterotrimers associate to form the active enzyme.

It is found in the cytoplasm. The catalysed reaction is urea + 2 H2O + H(+) = hydrogencarbonate + 2 NH4(+). The protein operates within nitrogen metabolism; urea degradation; CO(2) and NH(3) from urea (urease route): step 1/1. The protein is Urease subunit beta of Ureaplasma parvum serovar 3 (strain ATCC 27815 / 27 / NCTC 11736).